Here is a 126-residue protein sequence, read N- to C-terminus: Nascent polypeptide-associated complex protein (126 aa).

Residues 10–77 (PRMMKQMQKM…AKKVAKAEEK (68 aa)) form the NAC-A/B domain.

The protein belongs to the NAC-alpha family. Homodimer. Interacts with the ribosome. Binds ribosomal RNA.

Its function is as follows. Contacts the emerging nascent chain on the ribosome. The chain is Nascent polypeptide-associated complex protein from Methanococcus maripaludis (strain C5 / ATCC BAA-1333).